Consider the following 235-residue polypeptide: High mobility group protein 1.2 (235 aa).

The segment covering 1-34 has biased composition (polar residues); it reads MNSGYSANIFPSSSSPTLYQSHQLQPNPSATMYQ. The segment at 1 to 47 is disordered; that stretch reads MNSGYSANIFPSSSSPTLYQSHQLQPNPSATMYQATPRDMGKPPVRG. 2 DNA-binding regions (HMG box) span residues 47-117 and 135-203; these read GKTS…AAYG and PKRA…RNYK.

It belongs to the HMGB family.

Its subcellular location is the nucleus. This is High mobility group protein 1.2 (hmg-1.2) from Caenorhabditis elegans.